Consider the following 272-residue polypeptide: Sulfur carrier protein FdhD (272 aa).

Cys-114 serves as the catalytic Cysteine persulfide intermediate.

This sequence belongs to the FdhD family.

It is found in the cytoplasm. Required for formate dehydrogenase (FDH) activity. Acts as a sulfur carrier protein that transfers sulfur from IscS to the molybdenum cofactor prior to its insertion into FDH. The protein is Sulfur carrier protein FdhD of Mycolicibacterium paratuberculosis (strain ATCC BAA-968 / K-10) (Mycobacterium paratuberculosis).